The following is a 575-amino-acid chain: MSGDWVRPGQALIWVIWIFGAIIEGSVTEEPHRYTKLGWVQGKQATVLGRLEPVNVFLGIPFAAPPLGPLRFSKPQPPIPWDNLREATAYPNLCFQNLEWLFIYQNLLKVSYPILGMSEDCLYLNIYAPCHANNGSSLPVMVWIPGGGFETGSASIFDGSALAVYEDVLVVTIQYRLGIFGFFTTQNQHAPGNWAFWDQLAALLWVRENIKYFGGNPDSVTIFGNSAGAISISSLILSPLSADLFHRAIMQSGVAIIPSLKSSDNDLKHDLQVVANVCDCNVSDSKALLKCLREKSSLELMSLSQKAKSFTRVVDGSFFSEEPLELLSQKTLKIVPSIIGVNNQECGYILPVRDTPEILLGSNESTALTLIHTLLHIPTQHLYIVTKEYFHGKHSPTDIRDTLLDLFGDVFFVVPGLVTARYHRDSGGPVYFYEFQHRPHCFQNSRPAFVKADHTDEIRFVFGGPFLKGDVVMFEEATEEEKLLSRKMMKYWANFARSGDPNGADLPPWPVYDENEQYLELDVNISTGRRLKDQRVEFWTDTLPLILSASKALLSPTFSLILLSLLSPVLLSAAS.

The first 28 residues, 1–28, serve as a signal peptide directing secretion; the sequence is MSGDWVRPGQALIWVIWIFGAIIEGSVT. The cysteines at positions 94 and 121 are disulfide-linked. An N-linked (GlcNAc...) asparagine glycan is attached at Asn134. The active-site Acyl-ester intermediate is the Ser226. An intrachain disulfide couples Cys280 to Cys291. N-linked (GlcNAc...) asparagine glycosylation occurs at Asn281. Glu345 serves as the catalytic Charge relay system. The N-linked (GlcNAc...) asparagine glycan is linked to Asn363. Catalysis depends on His454, which acts as the Charge relay system. Asn524 carries an N-linked (GlcNAc...) asparagine glycan.

It belongs to the type-B carboxylesterase/lipase family. In terms of processing, N-glycosylated.

The protein resides in the secreted. The catalysed reaction is a carboxylic ester + H2O = an alcohol + a carboxylate + H(+). Involved in the detoxification of xenobiotics and in the activation of ester and amide prodrugs. The chain is Carboxylesterase 5A (Ces5a) from Mus musculus (Mouse).